The sequence spans 760 residues: Semaphorin-4A (760 aa).

An N-terminal signal peptide occupies residues 1–32; the sequence is MALPSLGQDSWSLLRVFFFQLFLLPSLPPASG. Over 33 to 682 the chain is Extracellular; it reads TGGQGPMPRV…MAAQRSYWPH (650 aa). The Sema domain maps to 36–494; that stretch reads QGPMPRVKYH…FSGGIWRVPR (459 aa). Cys-113 and Cys-124 are disulfide-bonded. Residues Asn-120 and Asn-135 are each glycosylated (N-linked (GlcNAc...) asparagine). 3 disulfide bridges follow: Cys-142/Cys-151, Cys-269/Cys-379, and Cys-293/Cys-339. Asn-496 carries an N-linked (GlcNAc...) asparagine glycan. The 52-residue stretch at 496 to 547 folds into the PSI domain; that stretch reads NCSVYESCVDCVLARDPHCAWDPESRLCSLLSGSTKPWKQDMERGNPEWVCT. Disulfide bonds link Cys-497–Cys-514, Cys-506–Cys-523, and Cys-579–Cys-623. The Ig-like C2-type domain maps to 572 to 630; sequence NSILELPCPHLSALASYHWSHGRAKISEASATVYNGSLLLLPQDGVGGLYQCVATENGY. Asn-606 carries N-linked (GlcNAc...) asparagine glycosylation. A helical transmembrane segment spans residues 683 to 703; that stretch reads FLIVTVLLAIVLLGVLTLLLA. At 704 to 760 the chain is on the cytoplasmic side; sequence SPLGALRARGKVQGCGMLPPREKAPLSRDQHLQPSKDHRTSASDVDADNNHLGAEVA. The interval 720 to 760 is disordered; that stretch reads MLPPREKAPLSRDQHLQPSKDHRTSASDVDADNNHLGAEVA. Positions 723–744 are enriched in basic and acidic residues; that stretch reads PREKAPLSRDQHLQPSKDHRTS.

Belongs to the semaphorin family. Interacts with PLXNB1, PLXNB2 and PLXNB3. Interacts with PLXND1. Interacts with TIMD2. Expressed in neurons and glia in the developing hippocampus.

Its subcellular location is the cell membrane. Functionally, cell surface receptor for PLXNB1, PLXNB2, PLXNB3 and PLXND1 that plays an important role in cell-cell signaling. Regulates glutamatergic and GABAergic synapse development. Promotes the development of inhibitory synapses in a PLXNB1-dependent manner and promotes the development of excitatory synapses in a PLXNB2-dependent manner. Plays a role in priming antigen-specific T-cells, promotes differentiation of Th1 T-helper cells, and thereby contributes to adaptive immunity. Promotes phosphorylation of TIMD2. Inhibits angiogenesis. Promotes axon growth cone collapse. Inhibits axonal extension by providing local signals to specify territories inaccessible for growing axons. The protein is Semaphorin-4A (Sema4a) of Mus musculus (Mouse).